The primary structure comprises 244 residues: MIRTDAKDGALVLFSGGQDSATCVAWALERYQTVETLGFDYGQRHRVELECREGVRDALKHRFPAWAGRLGDDHMIDLSVLGAISDTAMTRTIEIETAANGLPNTFVPGRNLLFMTIAAAIAYRRGLRVLVGGMCETDFSGYPDCRDDTMKALQVALNLGMDTRVVLETPLMWLDKAQTWQLAEQLGGAALVELIRVETHTCYVGERAELHDWGFGCGECPACKLRKRGYEAYLKGERVTEAPL.

An ATP-binding site is contributed by 14–24; the sequence is FSGGQDSATCV. Zn(2+) is bound by residues Cys202, Cys217, Cys220, and Cys223.

It belongs to the QueC family. Zn(2+) is required as a cofactor.

The enzyme catalyses 7-carboxy-7-deazaguanine + NH4(+) + ATP = 7-cyano-7-deazaguanine + ADP + phosphate + H2O + H(+). The protein operates within purine metabolism; 7-cyano-7-deazaguanine biosynthesis. Its function is as follows. Catalyzes the ATP-dependent conversion of 7-carboxy-7-deazaguanine (CDG) to 7-cyano-7-deazaguanine (preQ(0)). The protein is 7-cyano-7-deazaguanine synthase of Burkholderia vietnamiensis (strain G4 / LMG 22486) (Burkholderia cepacia (strain R1808)).